The following is a 98-amino-acid chain: Large ribosomal subunit protein eL21 (98 aa).

This sequence belongs to the eukaryotic ribosomal protein eL21 family.

In Methanocorpusculum labreanum (strain ATCC 43576 / DSM 4855 / Z), this protein is Large ribosomal subunit protein eL21.